A 407-amino-acid polypeptide reads, in one-letter code: Aminomethyltransferase, mitochondrial (407 aa).

The N-terminal 29 residues, 1–29 (MRGGLWQLGQSITRRLGQSDKKTIARRCY), are a transit peptide targeting the mitochondrion. Substrate is bound by residues Glu234, Arg265, and Tyr403.

This sequence belongs to the GcvT family. The glycine cleavage system is composed of four proteins: P, T, L and H.

It localises to the mitochondrion. The enzyme catalyses N(6)-[(R)-S(8)-aminomethyldihydrolipoyl]-L-lysyl-[protein] + (6S)-5,6,7,8-tetrahydrofolate = N(6)-[(R)-dihydrolipoyl]-L-lysyl-[protein] + (6R)-5,10-methylene-5,6,7,8-tetrahydrofolate + NH4(+). Its function is as follows. The glycine cleavage system catalyzes the degradation of glycine. The sequence is that of Aminomethyltransferase, mitochondrial (GDCST) from Flaveria pringlei.